Consider the following 810-residue polypeptide: Plasminogen (810 aa).

An N-terminal signal peptide occupies residues 1–19; the sequence is MEHKEVVLLLLLFLKSGQG. The PAN domain occupies 20-98; the sequence is EPLDDYVNTQ…RDVVLFEKKV (79 aa). Disulfide bonds link Cys49-Cys73, Cys53-Cys61, Cys103-Cys181, Cys124-Cys164, Cys152-Cys176, Cys185-Cys262, Cys188-Cys316, Cys206-Cys245, Cys234-Cys257, Cys275-Cys352, Cys296-Cys335, and Cys324-Cys347. Kringle domains lie at 103–181, 184–262, and 275–352; these read CKTG…IPEC, ACMH…IPRC, and CLKG…IPSC. The disordered stretch occupies residues 126–145; that stretch reads KWSSTSPHRPRFSPATHPSE. L-lysine-binding residues include Arg136, Asp158, and Arg172. Thr365 carries O-linked (GalNAc...) threonine glycosylation. Disulfide bonds link Cys377-Cys454, Cys398-Cys437, Cys426-Cys449, Cys481-Cys560, Cys502-Cys543, Cys531-Cys555, Cys567-Cys685, Cys577-Cys585, and Cys607-Cys623. Kringle domains follow at residues 377–454 and 481–560; these read CYHG…LKKC and CMFG…VPQC. Residues Asp432 and Arg445 each contribute to the L-lysine site. Residues 581–808 form the Peptidase S1 domain; it reads VVGGCVANAH…FVTWIEGVMR (228 aa). Position 597 is a phosphoserine (Ser597). Residues His622 and Asp665 each act as charge relay system in the active site. Ser688 carries the post-translational modification Phosphoserine. Intrachain disulfides connect Cys699-Cys766, Cys729-Cys745, and Cys756-Cys784. Ser760 (charge relay system) is an active-site residue.

Belongs to the peptidase S1 family. Plasminogen subfamily. In terms of assembly, interacts with CSPG4 and AMOT. Interacts (via the Kringle domains) with HRG; the interaction tethers PLG to the cell surface and enhances its activation. Interacts (via Kringle 4 domain) with ADA; the interaction stimulates PLG activation when in complex with DPP4. Angiostatin: Interacts with ATP5F1A; the interaction inhibits most of the angiogenic effects of angiostatin. Post-translationally, in the presence of the inhibitor, the activation involves only cleavage after Arg-580, yielding two chains held together by two disulfide bonds. In the absence of the inhibitor, the activation involves additionally the removal of the activation peptide.

The protein localises to the secreted. It carries out the reaction Preferential cleavage: Lys-|-Xaa &gt; Arg-|-Xaa, higher selectivity than trypsin. Converts fibrin into soluble products.. With respect to regulation, converted into plasmin by plasminogen activators, both plasminogen and its activator being bound to fibrin. Activated with catalytic amounts of streptokinase. Plasmin dissolves the fibrin of blood clots and acts as a proteolytic factor in a variety of other processes including embryonic development, tissue remodeling, tumor invasion, and inflammation. In ovulation, weakens the walls of the Graafian follicle. It activates the urokinase-type plasminogen activator, collagenases and several complement zymogens, such as C1, C4 and C5. Cleavage of fibronectin and laminin leads to cell detachment and apoptosis. Also cleaves fibrin, thrombospondin and von Willebrand factor. Its role in tissue remodeling and tumor invasion may be modulated by CSPG4. Binds to cells. The sequence is that of Plasminogen (PLG) from Pongo abelii (Sumatran orangutan).